The sequence spans 65 residues: Large ribosomal subunit protein bL35 (65 aa).

3 stretches are compositionally biased toward basic residues: residues 1–18 (MPKMKTKSAAAKRFKRTA), 31–44 (HRFHGKTKKQRRQL), and 55–65 (VKRYKKMIPAK). Residues 1 to 65 (MPKMKTKSAA…KRYKKMIPAK (65 aa)) are disordered.

Belongs to the bacterial ribosomal protein bL35 family.

The protein is Large ribosomal subunit protein bL35 of Limosilactobacillus fermentum (strain NBRC 3956 / LMG 18251) (Lactobacillus fermentum).